The chain runs to 166 residues: Phosphopantetheine adenylyltransferase (166 aa).

A substrate-binding site is contributed by Thr14. ATP contacts are provided by residues 14–15 (TF) and His22. Substrate is bound by residues Lys46, Leu78, and Arg92. Residues 93 to 95 (GLR), Glu103, and 128 to 134 (WMYLSSS) each bind ATP.

The protein belongs to the bacterial CoaD family. As to quaternary structure, homohexamer. Mg(2+) serves as cofactor.

It localises to the cytoplasm. The catalysed reaction is (R)-4'-phosphopantetheine + ATP + H(+) = 3'-dephospho-CoA + diphosphate. It functions in the pathway cofactor biosynthesis; coenzyme A biosynthesis; CoA from (R)-pantothenate: step 4/5. Its function is as follows. Reversibly transfers an adenylyl group from ATP to 4'-phosphopantetheine, yielding dephospho-CoA (dPCoA) and pyrophosphate. In Maridesulfovibrio salexigens (strain ATCC 14822 / DSM 2638 / NCIMB 8403 / VKM B-1763) (Desulfovibrio salexigens), this protein is Phosphopantetheine adenylyltransferase.